We begin with the raw amino-acid sequence, 92 residues long: Nodulation protein F (92 aa).

A Carrier domain is found at 4–88; the sequence is QLTVEIIAAI…DVVEAVRGLI (85 aa). S45 is subject to O-(pantetheine 4'-phosphoryl)serine.

Post-translationally, 4'-phosphopantetheine is transferred from CoA to a specific serine of apo-NodF.

Functionally, proposed to synthesize nod factor fatty acyl chain. Involved in trans-2,trans-4,trans-6,cis-11-octadecatetraenoic acid biosynthesis. The chain is Nodulation protein F (nodF) from Rhizobium leguminosarum bv. trifolii.